The chain runs to 171 residues: Adenine phosphoribosyltransferase (171 aa).

This sequence belongs to the purine/pyrimidine phosphoribosyltransferase family. In terms of assembly, homodimer.

The protein resides in the cytoplasm. It carries out the reaction AMP + diphosphate = 5-phospho-alpha-D-ribose 1-diphosphate + adenine. Its pathway is purine metabolism; AMP biosynthesis via salvage pathway; AMP from adenine: step 1/1. Functionally, catalyzes a salvage reaction resulting in the formation of AMP, that is energically less costly than de novo synthesis. The polypeptide is Adenine phosphoribosyltransferase (apt) (Prochlorococcus marinus subsp. pastoris (strain CCMP1986 / NIES-2087 / MED4)).